A 201-amino-acid polypeptide reads, in one-letter code: Holliday junction branch migration complex subunit RuvA (201 aa).

The interval 1-63 (MIEYIKGEIA…EDAYVLYGFA (63 aa)) is domain I. Residues 64–142 (DKQERELFLL…TGAMAATAVG (79 aa)) are domain II. Residues 143-153 (GAAGALLPAMN) form a flexible linker region. The segment at 153–201 (NAEVQEEAIAALTMLGFAAAPSQKAVLAILKEEPDAPVEKVIKLALKRL) is domain III.

Belongs to the RuvA family. As to quaternary structure, homotetramer. Forms an RuvA(8)-RuvB(12)-Holliday junction (HJ) complex. HJ DNA is sandwiched between 2 RuvA tetramers; dsDNA enters through RuvA and exits via RuvB. An RuvB hexamer assembles on each DNA strand where it exits the tetramer. Each RuvB hexamer is contacted by two RuvA subunits (via domain III) on 2 adjacent RuvB subunits; this complex drives branch migration. In the full resolvosome a probable DNA-RuvA(4)-RuvB(12)-RuvC(2) complex forms which resolves the HJ.

The protein resides in the cytoplasm. Its function is as follows. The RuvA-RuvB-RuvC complex processes Holliday junction (HJ) DNA during genetic recombination and DNA repair, while the RuvA-RuvB complex plays an important role in the rescue of blocked DNA replication forks via replication fork reversal (RFR). RuvA specifically binds to HJ cruciform DNA, conferring on it an open structure. The RuvB hexamer acts as an ATP-dependent pump, pulling dsDNA into and through the RuvAB complex. HJ branch migration allows RuvC to scan DNA until it finds its consensus sequence, where it cleaves and resolves the cruciform DNA. This Bacteroides fragilis (strain ATCC 25285 / DSM 2151 / CCUG 4856 / JCM 11019 / LMG 10263 / NCTC 9343 / Onslow / VPI 2553 / EN-2) protein is Holliday junction branch migration complex subunit RuvA.